We begin with the raw amino-acid sequence, 131 residues long: UPF0102 protein YraN (131 aa).

A compositionally biased stretch (polar residues) spans 1–19; sequence MATVPTRSGSPRQLTTKQT. A disordered region spans residues 1–20; sequence MATVPTRSGSPRQLTTKQTG.

The protein belongs to the UPF0102 family.

The protein is UPF0102 protein YraN of Escherichia fergusonii (strain ATCC 35469 / DSM 13698 / CCUG 18766 / IAM 14443 / JCM 21226 / LMG 7866 / NBRC 102419 / NCTC 12128 / CDC 0568-73).